We begin with the raw amino-acid sequence, 228 residues long: Probable septum site-determining protein MinC (228 aa).

It belongs to the MinC family. Interacts with MinD and FtsZ.

Cell division inhibitor that blocks the formation of polar Z ring septums. Rapidly oscillates between the poles of the cell to destabilize FtsZ filaments that have formed before they mature into polar Z rings. Prevents FtsZ polymerization. The sequence is that of Probable septum site-determining protein MinC from Bacillus cereus (strain G9842).